A 1031-amino-acid chain; its full sequence is GTPase activating protein Gyp51 (1031 aa).

Residues Met-1–Glu-32 show a composition bias toward basic and acidic residues. 5 disordered regions span residues Met-1–Asn-229, Phe-278–Asp-317, Asp-339–Ala-371, Asn-420–Val-459, and Lys-490–Pro-520. Over residues Thr-43–Gln-59 the composition is skewed to polar residues. Over residues Phe-62–Ile-78 the composition is skewed to acidic residues. A compositionally biased stretch (polar residues) spans Ser-105–Asn-117. Residues Glu-195–Glu-217 are compositionally biased toward basic and acidic residues. Residues Ser-219 to Asn-229 are compositionally biased toward acidic residues. The segment covering Phe-278–Glu-306 has biased composition (polar residues). Polar residues-rich tracts occupy residues Asn-420–Gln-429, Gly-436–Pro-455, and Thr-493–His-505. The 197-residue stretch at His-610 to Gly-806 folds into the Rab-GAP TBC domain. Residues Leu-798–Leu-818 form a helical membrane-spanning segment.

It belongs to the GYP5 family.

It localises to the membrane. Its subcellular location is the cytoplasm. Functionally, GTPase-activating protein involved in ER to Golgi trafficking and polarized exocytosis. The chain is GTPase activating protein Gyp51 (gyp51) from Schizosaccharomyces pombe (strain 972 / ATCC 24843) (Fission yeast).